The primary structure comprises 101 residues: Small ribosomal subunit protein uS14 (101 aa).

Residues 53-72 (RDAAAVRVRNRDSHDGRPRG) are disordered. Basic and acidic residues predominate over residues 61–70 (RNRDSHDGRP).

Belongs to the universal ribosomal protein uS14 family. In terms of assembly, part of the 30S ribosomal subunit. Contacts proteins S3 and S10.

In terms of biological role, binds 16S rRNA, required for the assembly of 30S particles and may also be responsible for determining the conformation of the 16S rRNA at the A site. The polypeptide is Small ribosomal subunit protein uS14 (Corynebacterium glutamicum (strain ATCC 13032 / DSM 20300 / JCM 1318 / BCRC 11384 / CCUG 27702 / LMG 3730 / NBRC 12168 / NCIMB 10025 / NRRL B-2784 / 534)).